The primary structure comprises 139 residues: Putative nickel-responsive regulator (139 aa).

H79, H90, H92, and C98 together coordinate Ni(2+).

Belongs to the transcriptional regulatory CopG/NikR family. The cofactor is Ni(2+).

In terms of biological role, transcriptional regulator. This is Putative nickel-responsive regulator from Geobacter sp. (strain M21).